We begin with the raw amino-acid sequence, 1679 residues long: AF4/FMR2 family member lilli (1679 aa).

Disordered stretches follow at residues 1 to 21, 55 to 78, 124 to 305, 406 to 539, 580 to 609, 733 to 755, 783 to 1172, and 1197 to 1319; these read MAQQ…SSIN, NYNM…QQGI, RSAP…EKDV, LHQL…GAQN, MGAG…SNKW, DSGT…AVGG, QPTQ…TTPH, and TPAQ…LQIG. The segment covering 69–78 has biased composition (basic and acidic residues); sequence REKIERQQGI. Composition is skewed to low complexity over residues 144–181 and 212–244; these read SLGH…QQQQ and PSSS…SSGG. Phosphothreonine is present on threonine 421. Positions 429–442 are enriched in basic and acidic residues; it reads LKTEKNHSLEKQDS. Positions 444–455 are enriched in acidic residues; it reads LENDLELSESED. 2 positions are modified to phosphoserine: serine 451 and serine 453. Over residues 464–484 the composition is skewed to low complexity; the sequence is SAGNSSNSSESDSSESGSESS. A compositionally biased stretch (basic residues) spans 492–501; sequence HPNHQQHHHQ. Positions 502 to 532 are enriched in low complexity; the sequence is LQQQQQQQQQQASMQQQQVLQQQQQHRPQPL. The segment covering 582–591 has biased composition (gly residues); sequence AGSGSGGTLS. Positions 598-609 are enriched in polar residues; it reads NKTPSPTESNKW. The segment covering 733–752 has biased composition (low complexity); that stretch reads DSGTSASGSSSSSSSSSDSA. The span at 783–796 shows a compositional bias: polar residues; that stretch reads QPTQSQKAPPSNSV. Over residues 810–820 the composition is skewed to basic residues; the sequence is QRQKKPRKKKA. Residues serine 829 and serine 830 each carry the phosphoserine modification. A DNA-binding region (a.T hook) is located at residues 859–871; sequence KKGRGRPRKQQQS. Over residues 868–906 the composition is skewed to low complexity; it reads QQQSGGSGNLSSASAGSSSQTKGPTLTAAKKPLAKTPLA. Serine 879 and serine 881 each carry phosphoserine. Residues 917 to 927 show a composition bias toward polar residues; it reads SQSSSNGNTPT. Composition is skewed to low complexity over residues 957–973 and 1001–1012; these read SSSA…SSSS and GSGSSSPSSSGS. Polar residues predominate over residues 1019–1030; it reads TRSQVGSGQALA. The span at 1042–1068 shows a compositional bias: low complexity; it reads SQHSQHLSSSECSSSSGGCTAVCSSSS. Over residues 1073-1090 the composition is skewed to basic and acidic residues; the sequence is EGRREKERERKPKSDKNK. Pro residues predominate over residues 1130–1140; the sequence is QPPPPQAPPAA. The segment covering 1198-1213 has biased composition (polar residues); it reads PAQQNGHLTPKDQATN. Basic and acidic residues-rich tracts occupy residues 1234 to 1251 and 1260 to 1288; these read EHPV…EAKF and FQLK…EQPP. Serine 1368 carries the post-translational modification Phosphoserine. Position 1370 is a phosphothreonine (threonine 1370). A compositionally biased stretch (low complexity) spans 1569 to 1589; the sequence is GNTPSSISPSNSVGSQGSGSN. The interval 1569 to 1594 is disordered; sequence GNTPSSISPSNSVGSQGSGSNTPPGR.

It belongs to the AF4 family.

It localises to the nucleus. Its function is as follows. Has a role in transcriptional regulation. Acts in parallel with the Ras/MAPK and the PI3K/PKB pathways in the control of cell identity and cellular growth. Essential for regulation of the cytoskeleton and cell growth but not for cell proliferation or growth rate. Required specifically for the microtubule-based basal transport of lipid droplets. Plays a partially redundant function downstream of Raf in cell fate specification in the developing eye. Pair-rule protein that regulates embryonic cellularization, gastrulation and segmentation. This chain is AF4/FMR2 family member lilli, found in Drosophila erecta (Fruit fly).